Consider the following 446-residue polypeptide: StAR-related lipid transfer protein 3 (446 aa).

Topologically, residues 1–52 (MSKRPGDLACDLERSLPALASLGTSLSHSQSLSSHFIPPPLEKRRAISDVRR) are cytoplasmic. The MENTAL domain maps to 47–218 (ISDVRRTFCL…YSPPESFAGS (172 aa)). A helical membrane pass occupies residues 53-73 (TFCLFVTFDLLFISLLWIIEL). Over 74-95 (NTNTGIRKNLEQEVIHYSFQSS) the chain is Extracellular. Residues 96–116 (FFDIFVLAFFRFSGLLLGYAV) traverse the membrane as a helical segment. At 117-121 (LRLQH) the chain is on the cytoplasmic side. A helical transmembrane segment spans residues 122-142 (WWVIAVTTLVSSAFLIVKVIL). The Extracellular segment spans residues 143–149 (SELLSKG). The helical transmembrane segment at 150–170 (AFGYLLPIVSFVLAWLETWFL) threads the bilayer. Topologically, residues 171–446 (DFKVLPQEAE…QRVGELGARA (276 aa)) are cytoplasmic. Residues 207 to 213 (QFYSPPE) carry the FFAT motif. Ser210, Ser218, and Ser222 each carry phosphoserine. Residues 231–444 (SFSAQEREYI…LRQRVGELGA (214 aa)) enclose the START domain.

It belongs to the STARD3 family. Homodimer. Interacts (via the MENTAL domain) with STARD3NL. Interacts (via phosphorylated FFAT motif) with VAPA (via MSP domain). Interacts (via phosphorylated FFAT motif) with VAPB (via MSP domain). Interacts (via phosphorylated FFAT motif) with MOSPD2 (via MSP domain); this interaction allows enrichment of MOSPD2 around endosomes. Phosphorylation at Ser-210 is necessary and sufficient for the direct interaction of the phosphorylated FFAT motif with the MSP domain of MOSPD2, VAPA and VAPB and allows the tethering of two membranes that participates in the formation of ER-endosome contacts. Phosphorylation of the FFAT motif leads to conformation changes. Additional phosphorylations around the core FFAT motif (QFYSPPE) are not essential but strengthen the interaction with MOSPD2, VAPA and VAPB. Phosphorylation at Ser-210 of FFAT motif drives membrane tethering between the endoplasmic reticulum and late endosomes via interaction with VAPA and VAPB that in turn allows the efficient transport of sterol mediated by the START domain.

The protein resides in the late endosome membrane. It carries out the reaction cholesterol(in) = cholesterol(out). Its function is as follows. Sterol-binding protein that mediates cholesterol transport from the endoplasmic reticulum to endosomes. The sterol transport mechanism is triggered by phosphorylation of FFAT motif that leads to membrane tethering between the endoplasmic reticulum and late endosomes via interaction with VAPA and VAPB. Acts as a lipid transfer protein that redirects sterol to the endosome at the expense of the cell membrane and favors membrane formation inside endosomes. May also mediate cholesterol transport between other membranes, such as mitochondria membrane or cell membrane. However, such results need additional experimental evidences; probably mainly mediates cholesterol transport from the endoplasmic reticulum to endosomes. Does not activate transcriptional cholesterol sensing. Able to bind other lipids, such as lutein, a xanthophyll carotenoids that form the macular pigment of the retina. In Mus musculus (Mouse), this protein is StAR-related lipid transfer protein 3.